The chain runs to 81 residues: Protein K6 (81 aa).

The protein belongs to the poxviridae K6 protein family.

The chain is Protein K6 from Homo sapiens (Human).